The following is a 204-amino-acid chain: Distal tail protein pb9 (204 aa).

As to quaternary structure, homohexamer. Interacts with baseplate tube protein p140 and baseplate hub protein pb3.

It localises to the virion. Functionally, forms the simplified baseplate, together with the p132 collar protein, the baseplate tube protein p140 and baseplate hub protein pb3. The polypeptide is Distal tail protein pb9 (D16) (Escherichia phage T5 (Enterobacteria phage T5)).